A 240-amino-acid polypeptide reads, in one-letter code: Proteasome subunit alpha (240 aa).

This sequence belongs to the peptidase T1A family. As to quaternary structure, the 20S proteasome core is composed of 14 alpha and 14 beta subunits that assemble into four stacked heptameric rings, resulting in a barrel-shaped structure. The two inner rings, each composed of seven catalytic beta subunits, are sandwiched by two outer rings, each composed of seven alpha subunits. The catalytic chamber with the active sites is on the inside of the barrel. Has a gated structure, the ends of the cylinder being occluded by the N-termini of the alpha-subunits. Is capped at one or both ends by the proteasome regulatory ATPase, PAN.

It localises to the cytoplasm. Its activity is regulated as follows. The formation of the proteasomal ATPase PAN-20S proteasome complex, via the docking of the C-termini of PAN into the intersubunit pockets in the alpha-rings, triggers opening of the gate for substrate entry. Interconversion between the open-gate and close-gate conformations leads to a dynamic regulation of the 20S proteasome proteolysis activity. Functionally, component of the proteasome core, a large protease complex with broad specificity involved in protein degradation. The protein is Proteasome subunit alpha of Methanoregula boonei (strain DSM 21154 / JCM 14090 / 6A8).